The sequence spans 256 residues: MNALREHWQALWTAVGYFTRIPVPASVGFSQAGLNRAARYFPLIGWLVGAVAAAVYWLVLRTVPAQGVAVAVSMGATLLLTGAFHEDGLADCADGFGGGYTPEDRLRIMHDSRIGAFGAIAVCMALLLKWQLLSAMAPHSIGILVAMVAAHAASRAAAVSHLLTHDYVRAEGKAKPVAQRMRWSDALWAGVFGVVPLLWFGPMCAALIVVGLILARWLLGRYFVRRIGGITGDCLGMAQQIFELLILWGLLAWMSS.

6 helical membrane passes run 40–60 (YFPL…WLVL), 64–84 (PAQG…TGAF), 114–134 (IGAF…QLLS), 143–163 (ILVA…SHLL), 194–214 (VVPL…GLIL), and 234–254 (CLGM…LAWM).

It belongs to the CobS family. Mg(2+) is required as a cofactor.

Its subcellular location is the cell inner membrane. It catalyses the reaction alpha-ribazole + adenosylcob(III)inamide-GDP = adenosylcob(III)alamin + GMP + H(+). It carries out the reaction alpha-ribazole 5'-phosphate + adenosylcob(III)inamide-GDP = adenosylcob(III)alamin 5'-phosphate + GMP + H(+). Its pathway is cofactor biosynthesis; adenosylcobalamin biosynthesis; adenosylcobalamin from cob(II)yrinate a,c-diamide: step 7/7. Joins adenosylcobinamide-GDP and alpha-ribazole to generate adenosylcobalamin (Ado-cobalamin). Also synthesizes adenosylcobalamin 5'-phosphate from adenosylcobinamide-GDP and alpha-ribazole 5'-phosphate. The sequence is that of Adenosylcobinamide-GDP ribazoletransferase from Ralstonia pickettii (strain 12J).